Here is a 446-residue protein sequence, read N- to C-terminus: WD repeat domain phosphoinositide-interacting protein 1 (446 aa).

WD repeat units follow at residues Ala3 to Leu42, Gln47 to Phe88, Thr92 to Ile126, Leu131 to Gly173, Lys177 to Val216, Leu222 to Leu261, and Phe304 to Leu343. The Nuclear receptor interaction signature appears at Leu131–Leu136. A L/FRRG motif motif is present at residues Phe225–Gly228. The tract at residues Ala386 to Leu406 is disordered.

It belongs to the WD repeat PROPPIN family. In terms of assembly, interacts with androgen receptor (AR) and the estrogen receptors ESR1 and ESR2. Interacts with WIPI2. Interacts with WDR45. Interacts with ATG16L1. May interact with NUDC. In terms of tissue distribution, ubiquitously expressed. Highly expressed in skeletal muscle, heart, testis, pancreas and placenta. Highly expressed in G361, Sk-mel-28, Sk-mel-13, WM852 and WM451 cells. Up-regulated in a variety of tumor tissues.

The protein localises to the golgi apparatus. Its subcellular location is the trans-Golgi network. The protein resides in the endosome. It is found in the cytoplasmic vesicle. It localises to the clathrin-coated vesicle. The protein localises to the preautophagosomal structure membrane. Its subcellular location is the cytoplasm. The protein resides in the cytoskeleton. In terms of biological role, component of the autophagy machinery that controls the major intracellular degradation process by which cytoplasmic materials are packaged into autophagosomes and delivered to lysosomes for degradation. Plays an important role in starvation- and calcium-mediated autophagy, as well as in mitophagy. Functions downstream of the ULK1 and PI3-kinases that produce phosphatidylinositol 3-phosphate (PtdIns3P) on membranes of the endoplasmic reticulum once activated. Binds phosphatidylinositol 3-phosphate (PtdIns3P), and maybe other phosphoinositides including PtdIns3,5P2 and PtdIns5P, and is recruited to phagophore assembly sites at the endoplasmic reticulum membranes. There, it assists WIPI2 in the recruitment of ATG12-ATG5-ATG16L1, a complex that directly controls the elongation of the nascent autophagosomal membrane. Together with WDR45/WIPI4, promotes ATG2 (ATG2A or ATG2B)-mediated lipid transfer by enhancing ATG2-association with phosphatidylinositol 3-monophosphate (PI3P)-containing membranes. Involved in xenophagy of Staphylococcus aureus. Invading S.aureus cells become entrapped in autophagosome-like WIPI1 positive vesicles targeted for lysosomal degradation. Also plays a distinct role in controlling the transcription of melanogenic enzymes and melanosome maturation, a process that is distinct from starvation-induced autophagy. May also regulate the trafficking of proteins involved in the mannose-6-phosphate receptor (MPR) recycling pathway. This Homo sapiens (Human) protein is WD repeat domain phosphoinositide-interacting protein 1 (WIPI1).